Here is a 321-residue protein sequence, read N- to C-terminus: Glutaminase (321 aa).

Residues Ser69, Asn120, Glu165, Asn172, Tyr196, Tyr248, and Val266 each coordinate substrate.

The protein belongs to the glutaminase family. In terms of assembly, homotetramer.

The catalysed reaction is L-glutamine + H2O = L-glutamate + NH4(+). This Bacteroides fragilis (strain ATCC 25285 / DSM 2151 / CCUG 4856 / JCM 11019 / LMG 10263 / NCTC 9343 / Onslow / VPI 2553 / EN-2) protein is Glutaminase.